Reading from the N-terminus, the 168-residue chain is Ribosome maturation factor RimM (168 aa).

Residues 94–167 (DGQYYYHQII…FVTVELMEGL (74 aa)) form the PRC barrel domain.

Belongs to the RimM family. Binds ribosomal protein uS19.

Its subcellular location is the cytoplasm. Its function is as follows. An accessory protein needed during the final step in the assembly of 30S ribosomal subunit, possibly for assembly of the head region. Essential for efficient processing of 16S rRNA. May be needed both before and after RbfA during the maturation of 16S rRNA. It has affinity for free ribosomal 30S subunits but not for 70S ribosomes. In Limosilactobacillus reuteri (strain DSM 20016) (Lactobacillus reuteri), this protein is Ribosome maturation factor RimM.